The sequence spans 331 residues: Ferrochelatase (331 aa).

Fe cation contacts are provided by His187 and Glu286.

The protein belongs to the ferrochelatase family.

The protein resides in the cytoplasm. The enzyme catalyses heme b + 2 H(+) = protoporphyrin IX + Fe(2+). Its pathway is porphyrin-containing compound metabolism; protoheme biosynthesis; protoheme from protoporphyrin-IX: step 1/1. In terms of biological role, catalyzes the ferrous insertion into protoporphyrin IX. This chain is Ferrochelatase, found in Legionella pneumophila (strain Lens).